The sequence spans 634 residues: Zinc finger and BTB domain-containing protein 22 (634 aa).

In terms of domain architecture, BTB spans 57 to 121 (CDVSIRVQGR…AYTGRLSMAA (65 aa)). 2 disordered regions span residues 167-247 (TVPG…APVV) and 308-461 (APTP…GTSV). Residues 180 to 198 (TVAPATMGSARSHASSRAS) show a composition bias toward low complexity. A compositionally biased stretch (polar residues) spans 199 to 209 (ENQSPSSSNYF). At S202 the chain carries Phosphoserine. The segment covering 217-229 (FSSSSQEAFAASA) has biased composition (low complexity). Acidic residues predominate over residues 317 to 340 (PDLEEEEEEEDLVLTCEDDEDEEL). A compositionally biased stretch (low complexity) spans 452 to 461 (GAVTVGGTSV). Residues 486-507 (FLCHCGKAFSHKSMRDRHVNMH) form a C2H2-type 1; atypical zinc finger. 2 consecutive C2H2-type zinc fingers follow at residues 513–535 (FDCP…MKTH) and 541–562 (YECG…HRGH). The segment at 568-634 (RLGGVGAVPG…MGFGGGGGAN (67 aa)) is disordered. Over residues 608–618 (PPSSRRVWSPP) the composition is skewed to low complexity.

The protein belongs to the krueppel C2H2-type zinc-finger protein family.

The protein localises to the nucleus. May be involved in transcriptional regulation. This Homo sapiens (Human) protein is Zinc finger and BTB domain-containing protein 22 (ZBTB22).